The sequence spans 327 residues: Methionyl-tRNA formyltransferase (327 aa).

(6S)-5,6,7,8-tetrahydrofolate is bound at residue 121-124; that stretch reads SLLP.

This sequence belongs to the Fmt family.

It catalyses the reaction L-methionyl-tRNA(fMet) + (6R)-10-formyltetrahydrofolate = N-formyl-L-methionyl-tRNA(fMet) + (6S)-5,6,7,8-tetrahydrofolate + H(+). Functionally, attaches a formyl group to the free amino group of methionyl-tRNA(fMet). The formyl group appears to play a dual role in the initiator identity of N-formylmethionyl-tRNA by promoting its recognition by IF2 and preventing the misappropriation of this tRNA by the elongation apparatus. This Burkholderia mallei (strain ATCC 23344) protein is Methionyl-tRNA formyltransferase.